The primary structure comprises 352 residues: Fc receptor-like A (352 aa).

A signal peptide spans 1–30 (MKLSCTLTQWALYVCPAVLLATQMLLAASS). Residues 46 to 65 (CQAAAEEDEGDEDDGDMTQS) are disordered. The span at 50–61 (AEEDEGDEDDGD) shows a compositional bias: acidic residues. Ig-like C2-type domains are found at residues 80–169 (PFHL…EAAS) and 182–260 (PVLK…RQIS). 2 disulfide bridges follow: Cys-109-Cys-153 and Cys-202-Cys-250. The disordered stretch occupies residues 275–310 (KPTASETPPTEALGPLPPPPASSAEQPRFSSPDPHL).

Monomer or homodimer; disulfide-linked. In terms of tissue distribution, highly expressed in spleen. Expressed in immature B-cell and B-cell lines.

It is found in the cytoplasm. Its function is as follows. May be implicated in B-cell differentiation and lymphomagenesis. In Mus musculus (Mouse), this protein is Fc receptor-like A (Fcrla).